The sequence spans 136 residues: 1,4-dihydroxy-2-naphthoyl-CoA hydrolase (136 aa).

The active site involves Asp16.

It belongs to the 4-hydroxybenzoyl-CoA thioesterase family. DHNA-CoA hydrolase subfamily.

The catalysed reaction is 1,4-dihydroxy-2-naphthoyl-CoA + H2O = 1,4-dihydroxy-2-naphthoate + CoA + H(+). The protein operates within cofactor biosynthesis; phylloquinone biosynthesis. It functions in the pathway quinol/quinone metabolism; 1,4-dihydroxy-2-naphthoate biosynthesis; 1,4-dihydroxy-2-naphthoate from chorismate: step 7/7. Catalyzes the hydrolysis of 1,4-dihydroxy-2-naphthoyl-CoA (DHNA-CoA) to 1,4-dihydroxy-2-naphthoate (DHNA), a reaction involved in phylloquinone (vitamin K1) biosynthesis. The protein is 1,4-dihydroxy-2-naphthoyl-CoA hydrolase of Synechococcus sp. (strain ATCC 27144 / PCC 6301 / SAUG 1402/1) (Anacystis nidulans).